A 721-amino-acid chain; its full sequence is Sodium/hydrogen exchanger 6 (721 aa).

Residues 1 to 44 are disordered; the sequence is MTSPKPWARSAGSCQTQRAVRTRKKECREEGESDTEKGPAASSA. Positions 26 to 37 are enriched in basic and acidic residues; the sequence is ECREEGESDTEK. Helical transmembrane passes span 91 to 111, 123 to 143, 196 to 216, 231 to 251, 272 to 292, 298 to 318, 344 to 364, 388 to 412, 434 to 454, 456 to 476, 499 to 519, and 535 to 555; these read SANLLIFILLLTLTILTIWLF, GLAMIYGLLVGLVLRYGIHVP, VTFDPEVFFNILLPPIIFYAG, ILAYAFLGTAISCFVIGSIMY, CLLFGAIVSATDPVTVLAIFH, VELYALLFGESVLNDAVAIVL, IGIFLGIFSGSFAMGAATGVV, MSWSTFLLAEAWGFTGVVAVLFCGI, FELLNFLAENFIFSYMGLTLF, FQNHVFNPTFVVGAFIAIFLG, NFQHMMMFAGLRGAMAFALAI, and LLIVFFTVWVFGGGTTAMLSC.

This sequence belongs to the monovalent cation:proton antiporter 1 (CPA1) transporter (TC 2.A.36) family. Homodimer. Interacts with RACK1; regulates the distribution of SLC9A6 between endosomes and the plasma membrane. Post-translationally, ubiquitinated (in vitro). In terms of processing, glycosylated.

The protein resides in the endosome membrane. Its subcellular location is the recycling endosome membrane. It localises to the early endosome membrane. The protein localises to the late endosome membrane. It is found in the cell membrane. The enzyme catalyses Na(+)(in) + H(+)(out) = Na(+)(out) + H(+)(in). It catalyses the reaction K(+)(in) + H(+)(out) = K(+)(out) + H(+)(in). Its function is as follows. Endosomal Na(+), K(+)/H(+) antiporter. Mediates the electroneutral exchange of endosomal luminal H(+) for a cytosolic Na(+) or K(+). By facilitating proton efflux, SLC9A6 counteracts the acidity generated by vacuolar (V)-ATPase, thereby limiting luminal acidification. Responsible for alkalizing and maintaining the endosomal pH, and consequently in, e.g., endosome maturation and trafficking of recycling endosomal cargo. Plays a critical role during neurodevelopment by regulating synaptic development and plasticity. Implicated in the maintenance of cell polarity in a manner that is dependent on its ability to modulate intravesicular pH. Regulates intracelular pH in some specialized cells, osteoclasts and stereocilia where this transporter localizes to the plasma membrane. This is Sodium/hydrogen exchanger 6 from Rattus norvegicus (Rat).